Here is an 805-residue protein sequence, read N- to C-terminus: Endonuclease MutS2 (805 aa).

ATP is bound at residue 344–351; the sequence is GPNGGGKT. Residues 705-724 are disordered; it reads RSRSEKLQAASEARPSAPPG. A Smr domain is found at 729–804; it reads LDVRGLRVEE…GDAVTVVSLR (76 aa).

The protein belongs to the DNA mismatch repair MutS family. MutS2 subfamily. Homodimer. Binds to stalled ribosomes, contacting rRNA.

Its function is as follows. Endonuclease that is involved in the suppression of homologous recombination and thus may have a key role in the control of bacterial genetic diversity. Functionally, acts as a ribosome collision sensor, splitting the ribosome into its 2 subunits. Detects stalled/collided 70S ribosomes which it binds and splits by an ATP-hydrolysis driven conformational change. Acts upstream of the ribosome quality control system (RQC), a ribosome-associated complex that mediates the extraction of incompletely synthesized nascent chains from stalled ribosomes and their subsequent degradation. Probably generates substrates for RQC. The sequence is that of Endonuclease MutS2 from Anaeromyxobacter sp. (strain Fw109-5).